Here is a 108-residue protein sequence, read N- to C-terminus: Small ribosomal subunit protein bS16 (108 aa).

Positions 82-108 (ESKFSKNTQTENKKPVSKKTTKKSKDN) are disordered. A compositionally biased stretch (basic residues) spans 96–108 (PVSKKTTKKSKDN).

This sequence belongs to the bacterial ribosomal protein bS16 family.

The sequence is that of Small ribosomal subunit protein bS16 from Mycoplasma mycoides subsp. mycoides SC (strain CCUG 32753 / NCTC 10114 / PG1).